The chain runs to 65 residues: Large ribosomal subunit protein bL35 (65 aa).

Positions Met-1–Phe-28 are disordered.

It belongs to the bacterial ribosomal protein bL35 family.

This chain is Large ribosomal subunit protein bL35, found in Trichodesmium erythraeum (strain IMS101).